A 336-amino-acid polypeptide reads, in one-letter code: Apyrase (336 aa).

The signal sequence occupies residues Met1–Gly21. Residue Asn209 is glycosylated (N-linked (GlcNAc...) asparagine).

Belongs to the apyrase family. Ca(2+) serves as cofactor. In terms of tissue distribution, salivary gland (at protein level).

It is found in the secreted. The catalysed reaction is a ribonucleoside 5'-triphosphate + 2 H2O = a ribonucleoside 5'-phosphate + 2 phosphate + 2 H(+). In terms of biological role, facilitates hematophagy by inhibiting ADP- and collagen-dependent platelet aggregation in the host. Cleaves adenosine triphosphate (ATP) and adenosine diphosphate (ADP) to adenosine monophosphate (AMP) and inorganic phosphate in calcium-dependent manner. The polypeptide is Apyrase (Phlebotomus duboscqi (Sandfly)).